The sequence spans 487 residues: Beta-barrel assembly-enhancing protease (487 aa).

An N-terminal signal peptide occupies residues Met1–Ala27. Residue His136 coordinates Zn(2+). Glu137 is a catalytic residue. Zn(2+) is bound by residues His140 and Glu201. Asp205 acts as the Proton donor in catalysis. TPR repeat units lie at residues His309–Asn342 and Asp427–Gly460.

It belongs to the peptidase M48 family. BepA subfamily. Requires Zn(2+) as cofactor.

It localises to the periplasm. In terms of biological role, functions both as a chaperone and a metalloprotease. Maintains the integrity of the outer membrane by promoting either the assembly or the elimination of outer membrane proteins, depending on their folding state. This chain is Beta-barrel assembly-enhancing protease, found in Salmonella typhi.